We begin with the raw amino-acid sequence, 616 residues long: Chaperone protein HscA homolog (616 aa).

The protein belongs to the heat shock protein 70 family.

Functionally, probable chaperone. Has a low intrinsic ATPase activity which is markedly stimulated by HscB. In Vibrio cholerae serotype O1 (strain ATCC 39315 / El Tor Inaba N16961), this protein is Chaperone protein HscA homolog.